Consider the following 561-residue polypeptide: Mercuric reductase (561 aa).

In terms of domain architecture, HMA spans 2-65 (THLKITGMTC…AVAGLGYKAT (64 aa)). Cys-11 and Cys-14 together coordinate a metal cation. Residues Ala-110, Gly-130, and Thr-135 each coordinate FAD. A disulfide bridge links Cys-136 with Cys-141. Residues Lys-145, Ala-211, Asp-403, and Val-411 each coordinate FAD. Hg(2+) contacts are provided by Cys-558 and Cys-559.

It belongs to the class-I pyridine nucleotide-disulfide oxidoreductase family. Homodimer. It depends on FAD as a cofactor.

It carries out the reaction Hg + NADP(+) + H(+) = Hg(2+) + NADPH. Its function is as follows. Resistance to Hg(2+) in bacteria appears to be governed by a specialized system which includes mercuric reductase. MerA protein is responsible for volatilizing mercury as Hg(0). Plays a pivotal role in mercury resistance under thiol-depleted conditions and cell protection. Protects cells under thiol-depleted conditions. This chain is Mercuric reductase (merA), found in Pseudomonas aeruginosa.